A 261-amino-acid chain; its full sequence is Yop proteins translocation protein T (261 aa).

7 helical membrane-spanning segments follow: residues 20-40 (FMACFVILPVLSKQLLGGVLL), 44-64 (IVCSLALYVYPAVANQPYIEV), 77-97 (IILGLLIGFVATIPFWALESA), 131-151 (TLITIFFSGGAFLSLLSALFH), 180-200 (ILLIAAVLAAPLLIAMFLAEF), 214-234 (VFVLAMPIKSAIASLLLVIYC), and 239-259 (SHASKAMLLVMDPISLLIPVL).

It belongs to the FliR/MopE/SpaR family.

It localises to the cell membrane. In terms of biological role, component of the yop secretion machinery. This Yersinia pestis protein is Yop proteins translocation protein T (yscT).